The sequence spans 306 residues: Porphobilinogen deaminase (306 aa).

S-(dipyrrolylmethanemethyl)cysteine is present on Cys239.

This sequence belongs to the HMBS family. As to quaternary structure, monomer. It depends on dipyrromethane as a cofactor.

The catalysed reaction is 4 porphobilinogen + H2O = hydroxymethylbilane + 4 NH4(+). It functions in the pathway porphyrin-containing compound metabolism; protoporphyrin-IX biosynthesis; coproporphyrinogen-III from 5-aminolevulinate: step 2/4. Tetrapolymerization of the monopyrrole PBG into the hydroxymethylbilane pre-uroporphyrinogen in several discrete steps. The chain is Porphobilinogen deaminase from Helicobacter pylori (strain P12).